Reading from the N-terminus, the 388-residue chain is Norsolorinic acid reductase (388 aa).

Tyr74 serves as the catalytic Proton donor. Residue 233–243 (GVLGRGQFRSA) participates in NADP(+) binding.

It belongs to the aldo/keto reductase family. Aldo/keto reductase 2 subfamily.

The protein operates within mycotoxin biosynthesis; aflatoxin biosynthesis. This is Norsolorinic acid reductase (norA) from Aspergillus flavus (strain ATCC 200026 / FGSC A1120 / IAM 13836 / NRRL 3357 / JCM 12722 / SRRC 167).